A 306-amino-acid chain; its full sequence is HORMA domain-containing protein 2 (306 aa).

In terms of domain architecture, HORMA spans 29–232 (HESLIMVKKL…TGFHSMKVKV (204 aa)).

As to quaternary structure, interacts with HORMAD1. In terms of processing, phosphorylated in a SPO11-dependent manner.

The protein resides in the nucleus. It is found in the chromosome. Functionally, essential for synapsis surveillance during meiotic prophase via the recruitment of ATR activity. Plays a key role in the male mid-pachytene checkpoint and the female meiotic prophase checkpoint: required for efficient build-up of ATR activity on unsynapsed chromosome regions, a process believed to form the basis of meiotic silencing of unsynapsed chromatin (MSUC) and meiotic prophase quality control in both sexes. Required for the DNA double-strand break-independent, BRCA1-dependent activation of ATR on the sex chromosomes that is essential for normal sex body formation. The sequence is that of HORMA domain-containing protein 2 (HORMAD2) from Bos taurus (Bovine).